Here is a 275-residue protein sequence, read N- to C-terminus: Polyamine aminopropyltransferase (275 aa).

Positions 2–235 (HLWFTEKQND…AMWSFTIGSK (234 aa)) constitute a PABS domain. Glutamine 31 contacts S-methyl-5'-thioadenosine. Residues histidine 62 and aspartate 86 each coordinate spermidine. Residues glutamate 106 and 137 to 138 (DG) each bind S-methyl-5'-thioadenosine. Catalysis depends on aspartate 155, which acts as the Proton acceptor. Spermidine is bound at residue 155–158 (DSTD). Residue proline 162 participates in S-methyl-5'-thioadenosine binding.

It belongs to the spermidine/spermine synthase family. As to quaternary structure, homodimer or homotetramer.

The protein resides in the cytoplasm. It catalyses the reaction S-adenosyl 3-(methylsulfanyl)propylamine + putrescine = S-methyl-5'-thioadenosine + spermidine + H(+). Its pathway is amine and polyamine biosynthesis; spermidine biosynthesis; spermidine from putrescine: step 1/1. In terms of biological role, catalyzes the irreversible transfer of a propylamine group from the amino donor S-adenosylmethioninamine (decarboxy-AdoMet) to putrescine (1,4-diaminobutane) to yield spermidine. This is Polyamine aminopropyltransferase from Desulforudis audaxviator (strain MP104C).